The primary structure comprises 201 residues: Probable chemoreceptor glutamine deamidase CheD 2 (201 aa).

Belongs to the CheD family.

The catalysed reaction is L-glutaminyl-[protein] + H2O = L-glutamyl-[protein] + NH4(+). Probably deamidates glutamine residues to glutamate on methyl-accepting chemotaxis receptors (MCPs), playing an important role in chemotaxis. This is Probable chemoreceptor glutamine deamidase CheD 2 from Chromobacterium violaceum (strain ATCC 12472 / DSM 30191 / JCM 1249 / CCUG 213 / NBRC 12614 / NCIMB 9131 / NCTC 9757 / MK).